Reading from the N-terminus, the 599-residue chain is MNPNARPHIEKILANMTQLPGVYRMLGKDGELLYVGKAKNLKNRVSSYFVKTIEHPKTQALVARIHDIETLVTRSETEALLLEQNLIKQHRPPYNIMLRDDKSYVYIFVSSDKPYPRIASGRGKGKHQIGKFFGPYPSAYSARDTLLVLQKLFNVRQCENSYFAQRKRPCLQYQIKRCSAPCVGLISPEDYKQDVDNSIRFLQGDTKELNQELIAKMEEAAEQLAFEKAMFYRDRLGLLREVQAQQAVFKIKGEADILAIAFQAGVTCVQIMYVRNGRMLGGKSYFPDMLSDDLGQMLSDFIANFYFQVADEVPSELIVNVELPDRKELEQALQTQFDKKIQIKHKVRETRAEWQELAIMNVQHAIKGQLSNHLELNERFHQLEQVVGRPVDRIECFDISHTMGEATIASCVVFDQGGARKRDYRQFGIEDITAGDDYAAMRQALTRRYKKHIVPDLLLIDGGKGQLHMAMEVMQTLGLDAFMVGVSKGEGRKPGLETLHFTDGSKIQLPEDHKALHLIQQVRDEAHRFAITKHRAKRDKRRAGSVLEVIPGLGPKRRRDLLTHFGGIQGVLKASEKELMLVSGLGPSMARTIYKILHE.

In terms of domain architecture, GIY-YIG spans Gln18–Ile96. In terms of domain architecture, UVR spans Lys207–Val242.

This sequence belongs to the UvrC family. Interacts with UvrB in an incision complex.

It is found in the cytoplasm. Its function is as follows. The UvrABC repair system catalyzes the recognition and processing of DNA lesions. UvrC both incises the 5' and 3' sides of the lesion. The N-terminal half is responsible for the 3' incision and the C-terminal half is responsible for the 5' incision. In Acinetobacter baylyi (strain ATCC 33305 / BD413 / ADP1), this protein is UvrABC system protein C.